The primary structure comprises 210 residues: 3-hexulose-6-phosphate synthase (210 aa).

Belongs to the HPS/KGPDC family. HPS subfamily.

It catalyses the reaction D-ribulose 5-phosphate + formaldehyde = D-arabino-hex-3-ulose 6-phosphate. It functions in the pathway one-carbon metabolism; formaldehyde assimilation via RuMP pathway; D-fructose 6-phosphate from D-ribulose 5-phosphate and formaldehyde: step 1/2. In terms of biological role, catalyzes the condensation of ribulose 5-phosphate with formaldehyde to form 3-hexulose 6-phosphate. The chain is 3-hexulose-6-phosphate synthase from Staphylococcus haemolyticus (strain JCSC1435).